Reading from the N-terminus, the 412-residue chain is Serine hydroxymethyltransferase (412 aa).

Residues Leu114 and 118-120 (GHL) contribute to the (6S)-5,6,7,8-tetrahydrofolate site. N6-(pyridoxal phosphate)lysine is present on Lys223.

This sequence belongs to the SHMT family. In terms of assembly, homodimer. Pyridoxal 5'-phosphate is required as a cofactor.

The protein localises to the cytoplasm. The catalysed reaction is (6R)-5,10-methylene-5,6,7,8-tetrahydrofolate + glycine + H2O = (6S)-5,6,7,8-tetrahydrofolate + L-serine. It functions in the pathway one-carbon metabolism; tetrahydrofolate interconversion. It participates in amino-acid biosynthesis; glycine biosynthesis; glycine from L-serine: step 1/1. Functionally, catalyzes the reversible interconversion of serine and glycine with tetrahydrofolate (THF) serving as the one-carbon carrier. This reaction serves as the major source of one-carbon groups required for the biosynthesis of purines, thymidylate, methionine, and other important biomolecules. Also exhibits THF-independent aldolase activity toward beta-hydroxyamino acids, producing glycine and aldehydes, via a retro-aldol mechanism. This chain is Serine hydroxymethyltransferase, found in Mesoplasma florum (strain ATCC 33453 / NBRC 100688 / NCTC 11704 / L1) (Acholeplasma florum).